Reading from the N-terminus, the 122-residue chain is Large ribosomal subunit protein bL12 (122 aa).

This sequence belongs to the bacterial ribosomal protein bL12 family. Homodimer. Part of the ribosomal stalk of the 50S ribosomal subunit. Forms a multimeric L10(L12)X complex, where L10 forms an elongated spine to which 2 to 4 L12 dimers bind in a sequential fashion. Binds GTP-bound translation factors.

Forms part of the ribosomal stalk which helps the ribosome interact with GTP-bound translation factors. Is thus essential for accurate translation. The sequence is that of Large ribosomal subunit protein bL12 from Xanthomonas oryzae pv. oryzae (strain MAFF 311018).